The sequence spans 201 residues: Myelomonocytic growth factor (201 aa).

Positions 1–23 (MCCLTPVLALALVLGAPWQALHG) are cleaved as a signal peptide. Intrachain disulfides connect C61–C67 and C89–C99. Residues N123 and N137 are each glycosylated (N-linked (GlcNAc...) asparagine).

It belongs to the IL-6 superfamily.

The protein localises to the secreted. Functionally, hematopoietic growth factor that stimulates the proliferation and colony formation of normal and transformed avian cells of the myeloid lineage. This Gallus gallus (Chicken) protein is Myelomonocytic growth factor.